The sequence spans 301 residues: Sulfate adenylyltransferase subunit 2 (301 aa).

The tract at residues 282-301 is disordered; that stretch reads RLIDRDEAGSMEKKKREGYF.

This sequence belongs to the PAPS reductase family. CysD subfamily. Heterodimer composed of CysD, the smaller subunit, and CysN.

It catalyses the reaction sulfate + ATP + H(+) = adenosine 5'-phosphosulfate + diphosphate. Its pathway is sulfur metabolism; hydrogen sulfide biosynthesis; sulfite from sulfate: step 1/3. Its function is as follows. With CysN forms the ATP sulfurylase (ATPS) that catalyzes the adenylation of sulfate producing adenosine 5'-phosphosulfate (APS) and diphosphate, the first enzymatic step in sulfur assimilation pathway. APS synthesis involves the formation of a high-energy phosphoric-sulfuric acid anhydride bond driven by GTP hydrolysis by CysN coupled to ATP hydrolysis by CysD. This Chelativorans sp. (strain BNC1) protein is Sulfate adenylyltransferase subunit 2.